The sequence spans 348 residues: Protein RecA (348 aa).

Gly-64–Thr-71 serves as a coordination point for ATP. A compositionally biased stretch (basic and acidic residues) spans Tyr-325–Leu-335. The segment at Tyr-325 to Glu-348 is disordered. Over residues Asp-336–Glu-348 the composition is skewed to acidic residues.

The protein belongs to the RecA family.

The protein resides in the cytoplasm. Its function is as follows. Can catalyze the hydrolysis of ATP in the presence of single-stranded DNA, the ATP-dependent uptake of single-stranded DNA by duplex DNA, and the ATP-dependent hybridization of homologous single-stranded DNAs. It interacts with LexA causing its activation and leading to its autocatalytic cleavage. The polypeptide is Protein RecA (Listeria monocytogenes serotype 4b (strain CLIP80459)).